The sequence spans 630 residues: Biosynthetic arginine decarboxylase (630 aa).

An N6-(pyridoxal phosphate)lysine modification is found at K99. 281-291 lines the substrate pocket; sequence VDIGGGLGVDY.

It belongs to the Orn/Lys/Arg decarboxylase class-II family. SpeA subfamily. The cofactor is Mg(2+). Requires pyridoxal 5'-phosphate as cofactor.

The enzyme catalyses L-arginine + H(+) = agmatine + CO2. Its function is as follows. Catalyzes the biosynthesis of agmatine from arginine. This is Biosynthetic arginine decarboxylase from Bacteroides thetaiotaomicron (strain ATCC 29148 / DSM 2079 / JCM 5827 / CCUG 10774 / NCTC 10582 / VPI-5482 / E50).